We begin with the raw amino-acid sequence, 265 residues long: Synaptoporin (265 aa).

Residues 1–4 lie on the Cytoplasmic side of the membrane; sequence MCMV. An MARVEL domain is found at 1 to 202; that stretch reads MCMVIFAPLF…NIWFVFKETG (202 aa). A helical transmembrane segment spans residues 5–25; that stretch reads IFAPLFAMFAFATCGGYSGGL. At 26–81 the chain is on the vesicular side; it reads RLSVDCVNKTESNLSIDIAFAYPFRLQQVTFEVPTCEGKEQQKLALVGDSSSSAEF. N-linked (GlcNAc...) asparagine glycans are attached at residues Asn-33 and Asn-38. The helical transmembrane segment at 82 to 102 threads the bilayer; that stretch reads FVTVAVFAFLYSLAATVVYIF. Topologically, residues 103-114 are cytoplasmic; the sequence is FQNKYRENNRGP. Residues 115–135 form a helical membrane-spanning segment; sequence LIDFIVTVVFSFLWLVGSSAW. Residues 136 to 177 are Vesicular-facing; sequence AKGLSDVKVATDPKEVLLLMSACKQPSNKCMAVHSPVMSSLN. Residues 178 to 198 traverse the membrane as a helical segment; sequence TSVVFGFLNFILWAGNIWFVF. The Cytoplasmic segment spans residues 199-265; that stretch reads KETGWHSSGQ…SGPTSFNNQI (67 aa). Repeat copies occupy residues 210-214, 222-226, 227-231, 232-236, and 238-242. A 5 X approximate repeats region spans residues 210–242; sequence YLSDPMEKHSSSYNQGRYNQESYGSSGGYSQQA. Ser-212 carries the phosphoserine modification. Positions 221-230 are enriched in polar residues; that stretch reads SYNQGRYNQE. A disordered region spans residues 221–265; it reads SYNQGRYNQESYGSSGGYSQQANLGPTSDEFGQQPSGPTSFNNQI. Residues 240–265 are compositionally biased toward polar residues; that stretch reads QQANLGPTSDEFGQQPSGPTSFNNQI.

The protein belongs to the synaptophysin/synaptobrevin family.

The protein resides in the cytoplasmic vesicle. It localises to the secretory vesicle. Its subcellular location is the synaptic vesicle membrane. It is found in the synapse. The protein localises to the synaptosome. Functionally, intrinsic membrane protein of small synaptic vesicles. Probable vesicular channel protein. This is Synaptoporin (Synpr) from Mus musculus (Mouse).